Consider the following 161-residue polypeptide: Disulfide bond formation protein B (161 aa).

The Cytoplasmic portion of the chain corresponds to 1–8; the sequence is MQANSRTY. A helical transmembrane segment spans residues 9-25; sequence FLLIAIVSFAMVGAALY. Residues 26 to 43 are Periplasmic-facing; that stretch reads MQYAENLQPCPLCIMQRF. Cysteine 35 and cysteine 38 are oxidised to a cystine. A helical transmembrane segment spans residues 44 to 58; sequence AFIGIGIFSLLAVIA. At 59–63 the chain is on the cytoplasmic side; sequence QNTRT. Residues 64 to 81 form a helical membrane-spanning segment; sequence LWQGLGMLSGVGGIAVAG. Residues 82 to 136 are Periplasmic-facing; it reads YQVALLMNPKASCGIDPLENWVNSLPTAKLLPQVFYSDGLCTAPTPPILGLSIPA. Residues cysteine 94 and cysteine 122 are joined by a disulfide bond. A helical transmembrane segment spans residues 137-155; the sequence is WSLIWLLILTLTLAVGLIR. At 156–161 the chain is on the cytoplasmic side; that stretch reads REKHFR.

It belongs to the DsbB family.

Its subcellular location is the cell inner membrane. Functionally, required for disulfide bond formation in some periplasmic proteins. Acts by oxidizing the DsbA protein. The chain is Disulfide bond formation protein B from Cupriavidus metallidurans (strain ATCC 43123 / DSM 2839 / NBRC 102507 / CH34) (Ralstonia metallidurans).